The chain runs to 315 residues: Cysteine proteinase 2 (315 aa).

The signal sequence occupies residues 1-13 (MFAFICLLAIASA). A propeptide spans 14 to 93 (IDFNTWASKN…NGQVKYLNIQ (80 aa)) (activation peptide). Cystine bridges form between cysteine 115/cysteine 161 and cysteine 152/cysteine 193. Cysteine 118 is a catalytic residue. Active-site residues include histidine 259 and asparagine 279.

This sequence belongs to the peptidase C1 family. As to quaternary structure, interacts with cysteine protease inhibitor ICP1. Interacts with cysteine protease inhibitor ICP2.

The protein resides in the cell membrane. The protein localises to the cytoplasmic vesicle. It localises to the phagosome. It is found in the secreted. It catalyses the reaction Hydrolysis of proteins, including basement membrane collagen and azocasein. Preferential cleavage: Arg-Arg-|-Xaa in small molecule substrates including Z-Arg-Arg-|-NHMec.. With respect to regulation, inhibited by cysteine protease inhibitors ICP1 and ICP2. Inhibited by leupeptin and such inhibitors of cysteine proteinases as L-transepoxysuccinyl-L-leucylamido-(4-guanidino)butane, peptidyldiazomethanes, iodoacetic acid and chicken cystatin. Cysteine protease which degrades matrix proteins such as collagen, laminin and fibronectin and thus is involved in the destruction of human tissue. Can abolish adhesion. May play an important role in pathogenicity. The sequence is that of Cysteine proteinase 2 from Entamoeba histolytica (strain ATCC 30459 / HM-1:IMSS / ABRM).